The following is a 289-amino-acid chain: 3-methyl-2-oxobutanoate hydroxymethyltransferase (289 aa).

Residues 1-15 (MSTTFQLDTSTSRAN) are compositionally biased toward polar residues. Positions 1-20 (MSTTFQLDTSTSRANPTPAP) are disordered. Asp-67 and Asp-106 together coordinate Mg(2+). Residues 67–68 (DS), Asp-106, and Lys-136 contribute to the 3-methyl-2-oxobutanoate site. Glu-138 provides a ligand contact to Mg(2+). Glu-205 serves as the catalytic Proton acceptor.

This sequence belongs to the PanB family. As to quaternary structure, homodecamer; pentamer of dimers. The cofactor is Mg(2+).

It localises to the cytoplasm. It catalyses the reaction 3-methyl-2-oxobutanoate + (6R)-5,10-methylene-5,6,7,8-tetrahydrofolate + H2O = 2-dehydropantoate + (6S)-5,6,7,8-tetrahydrofolate. It functions in the pathway cofactor biosynthesis; (R)-pantothenate biosynthesis; (R)-pantoate from 3-methyl-2-oxobutanoate: step 1/2. Catalyzes the reversible reaction in which hydroxymethyl group from 5,10-methylenetetrahydrofolate is transferred onto alpha-ketoisovalerate to form ketopantoate. In Novosphingobium aromaticivorans (strain ATCC 700278 / DSM 12444 / CCUG 56034 / CIP 105152 / NBRC 16084 / F199), this protein is 3-methyl-2-oxobutanoate hydroxymethyltransferase.